The following is a 248-amino-acid chain: Probable aquaporin TIP2-1 (248 aa).

A run of 2 helical transmembrane segments spans residues 20 to 40 and 54 to 74; these read AYVA…GSAI and AGLV…VSVA. The NPA 1 motif lies at 83–85; that stretch reads NPA. 3 consecutive transmembrane segments (helical) span residues 97–119, 141–161, and 168–188; these read TILT…CLLL, GVVM…ATAA, and LGTI…LAAG. The NPA 2 motif lies at 196–198; that stretch reads NPA. The helical transmembrane segment at 217-237 threads the bilayer; that stretch reads WVGPLIGGGLAGLVYGDVFIG.

This sequence belongs to the MIP/aquaporin (TC 1.A.8) family. TIP (TC 1.A.8.10) subfamily. Expressed in roots and anthers.

It is found in the vacuole membrane. Aquaporins facilitate the transport of water and small neutral solutes across cell membranes. May be involved in transport from the vacuolar compartment to the cytoplasm. This Oryza sativa subsp. japonica (Rice) protein is Probable aquaporin TIP2-1 (TIP2-1).